We begin with the raw amino-acid sequence, 392 residues long: Elongation factor Tu-3 (392 aa).

The 197-residue stretch at 10-206 folds into the tr-type G domain; it reads KPHLNIGTMG…AVDTYVPMPE (197 aa). Residues 19 to 26 form a G1 region; the sequence is GHVDHGKT. A GTP-binding site is contributed by 19–26; that stretch reads GHVDHGKT. Thr-26 lines the Mg(2+) pocket. Residues 63–67 form a G2 region; that stretch reads GITIN. Positions 84-87 are G3; that stretch reads DMPG. Residues 84–88 and 139–142 each bind GTP; these read DMPGH and NKAD. The segment at 139–142 is G4; that stretch reads NKAD. Residues 176 to 178 are G5; sequence SGL.

This sequence belongs to the TRAFAC class translation factor GTPase superfamily. Classic translation factor GTPase family. EF-Tu/EF-1A subfamily. Monomer.

The protein resides in the cytoplasm. It catalyses the reaction GTP + H2O = GDP + phosphate + H(+). Functionally, GTP hydrolase that promotes the GTP-dependent binding of aminoacyl-tRNA to the A-site of ribosomes during protein biosynthesis. This is Elongation factor Tu-3 from Streptomyces coelicolor (strain ATCC BAA-471 / A3(2) / M145).